Consider the following 283-residue polypeptide: Bifunctional protein FolD (283 aa).

NADP(+)-binding positions include 163 to 165, S188, and I229; that span reads GRS.

It belongs to the tetrahydrofolate dehydrogenase/cyclohydrolase family. As to quaternary structure, homodimer.

It catalyses the reaction (6R)-5,10-methylene-5,6,7,8-tetrahydrofolate + NADP(+) = (6R)-5,10-methenyltetrahydrofolate + NADPH. The enzyme catalyses (6R)-5,10-methenyltetrahydrofolate + H2O = (6R)-10-formyltetrahydrofolate + H(+). Its pathway is one-carbon metabolism; tetrahydrofolate interconversion. In terms of biological role, catalyzes the oxidation of 5,10-methylenetetrahydrofolate to 5,10-methenyltetrahydrofolate and then the hydrolysis of 5,10-methenyltetrahydrofolate to 10-formyltetrahydrofolate. This is Bifunctional protein FolD from Campylobacter concisus (strain 13826).